The following is a 353-amino-acid chain: ATP-dependent (S)-NAD(P)H-hydrate dehydratase (353 aa).

Residues Met18 to Leu345 enclose the YjeF C-terminal domain. Positions Arg95–Pro121 are disordered. A compositionally biased stretch (low complexity) spans Ser96–Lys114. Residues Gly143 and Asn196 to Arg202 each bind (6S)-NADPHX. ATP-binding positions include Lys241–Asp245 and Gly260–Gly269. Asp270 provides a ligand contact to (6S)-NADPHX.

The protein belongs to the NnrD/CARKD family. The cofactor is Mg(2+).

Its subcellular location is the cytoplasm. The enzyme catalyses (6S)-NADHX + ATP = ADP + phosphate + NADH + H(+). It catalyses the reaction (6S)-NADPHX + ATP = ADP + phosphate + NADPH + H(+). In terms of biological role, catalyzes the dehydration of the S-form of NAD(P)HX at the expense of ATP, which is converted to ADP. Together with NAD(P)HX epimerase, which catalyzes the epimerization of the S- and R-forms, the enzyme allows the repair of both epimers of NAD(P)HX, a damaged form of NAD(P)H that is a result of enzymatic or heat-dependent hydration. This is ATP-dependent (S)-NAD(P)H-hydrate dehydratase from Neurospora crassa (strain ATCC 24698 / 74-OR23-1A / CBS 708.71 / DSM 1257 / FGSC 987).